The primary structure comprises 133 residues: MQKSNIVEYKGLGRRKSSIARVKLVPGSGKVLVNDRQPENYFPNKLVIQDMMQPLVLTKTAETYDVYVKVIGGGFNGQAGAIRLGITRALIQTREDLKTDLRKAGLVTRDSRVKERKKFGLYGARRAPQFTKR.

Belongs to the universal ribosomal protein uS9 family.

In Ureaplasma parvum serovar 3 (strain ATCC 700970), this protein is Small ribosomal subunit protein uS9.